The primary structure comprises 536 residues: Sensory rhodopsin I transducer (536 aa).

Residues 2 to 14 (TIAWARRRYGVKL) lie on the Cytoplasmic side of the membrane. The chain crosses the membrane as a helical span at residues 15 to 29 (GLGYIATAGLLVGVG). Residues 30-39 (VTTNDVPSTI) are Extracellular-facing. A helical membrane pass occupies residues 40 to 55 (VAGIAGLLTLGSINAA). The HAMP 1 domain occupies 55–107 (AETVASIKEIAAQTERVANGNLEQEVTSTRTDEFGSLADSIEQMRQSLRGRLN). Topologically, residues 56–536 (ETVASIKEIA…MRAGADGGGA (481 aa)) are cytoplasmic. Positions 116–145 (LEETQAEAETAREEAEQAKQEAQAAEREAR) are disordered. Residues 124–145 (ETAREEAEQAKQEAQAAEREAR) are compositionally biased toward basic and acidic residues. Residues 149–202 (ATYQDTAKRYGETMEAAATGDLTQRVDVDTDHEAMETVGTAFNQMMDDLQATVR) form the HAMP 2 domain. One can recognise a Methyl-accepting transducer domain in the interval 221-459 (TSADIEASAG…STATSVERVA (239 aa)). E266 bears the Glutamate methyl ester (Glu) mark. Residues 278-307 (SEDVATASDAARDSSKSALDEMSSIETEVD) are disordered. Positions 287–296 (AARDSSKSAL) are enriched in basic and acidic residues. Glutamate methyl ester (Glu) is present on E473. A disordered region spans residues 512 to 536 (TEDSETAGGSVEQPVMRAGADGGGA).

The protein belongs to the methyl-accepting chemotaxis (MCP) protein family. Post-translationally, methylated by CheR.

The protein localises to the cell membrane. Its function is as follows. Transduces signals from the phototaxis receptor sensory rhodopsin I (SR-I) to the flagellar motor. Responds to light changes through the variation of the level of methylation. In Halobacterium salinarum (strain ATCC 29341 / DSM 671 / R1), this protein is Sensory rhodopsin I transducer (htr1).